The chain runs to 466 residues: Trigger factor (466 aa).

Residues 166–245 (GDFAQIDLVA…LNAVKERELP (80 aa)) form the PPIase FKBP-type domain. 2 disordered regions span residues 313–332 (LEQESRLEDDEHRAEVTESS) and 424–466 (LPDD…AADK). A compositionally biased stretch (acidic residues) spans 426 to 444 (DDGEAVDEDATPEDTDAPA). Residues 453 to 466 (PKKKAAAKKKAADK) show a composition bias toward basic residues.

Belongs to the FKBP-type PPIase family. Tig subfamily.

It localises to the cytoplasm. The catalysed reaction is [protein]-peptidylproline (omega=180) = [protein]-peptidylproline (omega=0). Involved in protein export. Acts as a chaperone by maintaining the newly synthesized protein in an open conformation. Functions as a peptidyl-prolyl cis-trans isomerase. This chain is Trigger factor, found in Leifsonia xyli subsp. xyli (strain CTCB07).